Here is an 861-residue protein sequence, read N- to C-terminus: Leucine--tRNA ligase (861 aa).

A 'HIGH' region motif is present at residues 42–52; sequence PYPSGRLHMGH. Residues 619 to 623 carry the 'KMSKS' region motif; that stretch reads KMSKS. Residue K622 coordinates ATP.

Belongs to the class-I aminoacyl-tRNA synthetase family.

It is found in the cytoplasm. It catalyses the reaction tRNA(Leu) + L-leucine + ATP = L-leucyl-tRNA(Leu) + AMP + diphosphate. This Haemophilus influenzae (strain 86-028NP) protein is Leucine--tRNA ligase.